The sequence spans 133 residues: p53 and DNA damage-regulated protein 1 (133 aa).

The protein belongs to the prefoldin subunit beta family. As to quaternary structure, component of the PAQosome complex which is responsible for the biogenesis of several protein complexes and which consists of R2TP complex members RUVBL1, RUVBL2, RPAP3 and PIH1D1, URI complex members PFDN2, PFDN6, PDRG1, UXT and URI1 as well as ASDURF, POLR2E and DNAAF10/WDR92. Predominantly expressed in normal testis and exhibits reduced but detectable expression in other organs.

Its subcellular location is the cytoplasm. Its function is as follows. May play a role in chaperone-mediated protein folding. This chain is p53 and DNA damage-regulated protein 1 (PDRG1), found in Homo sapiens (Human).